The chain runs to 267 residues: 2-keto-3-deoxy-L-rhamnonate aldolase (267 aa).

The Proton acceptor role is filled by H49. Position 151 (Q151) interacts with substrate. E153 contacts Mg(2+). Positions 178 and 179 each coordinate substrate. Residue D179 coordinates Mg(2+).

The protein belongs to the HpcH/HpaI aldolase family. KDR aldolase subfamily. In terms of assembly, homohexamer. It depends on Mg(2+) as a cofactor.

It catalyses the reaction 2-dehydro-3-deoxy-L-rhamnonate = (S)-lactaldehyde + pyruvate. In terms of biological role, catalyzes the reversible retro-aldol cleavage of 2-keto-3-deoxy-L-rhamnonate (KDR) to pyruvate and lactaldehyde. This Shigella sonnei (strain Ss046) protein is 2-keto-3-deoxy-L-rhamnonate aldolase.